The sequence spans 337 residues: DNA-directed RNA polymerase subunit alpha (337 aa).

Residues 1–233 (MVREEVAGST…DLFLPFLHTE (233 aa)) are alpha N-terminal domain (alpha-NTD). The tract at residues 267-337 (IPLNCIFIDQ…LPMDLPKNKF (71 aa)) is alpha C-terminal domain (alpha-CTD).

It belongs to the RNA polymerase alpha chain family. In terms of assembly, in plastids the minimal PEP RNA polymerase catalytic core is composed of four subunits: alpha, beta, beta', and beta''. When a (nuclear-encoded) sigma factor is associated with the core the holoenzyme is formed, which can initiate transcription.

It is found in the plastid. It localises to the chloroplast. The catalysed reaction is RNA(n) + a ribonucleoside 5'-triphosphate = RNA(n+1) + diphosphate. Functionally, DNA-dependent RNA polymerase catalyzes the transcription of DNA into RNA using the four ribonucleoside triphosphates as substrates. This Oryza nivara (Indian wild rice) protein is DNA-directed RNA polymerase subunit alpha.